Here is a 292-residue protein sequence, read N- to C-terminus: MKDKVLKLGLPKGSLQETTLKLFKKAGYNIHVSHRSYYPVIDDEEISGMLLRAQEVPVYVEKGYLDCGLTGYDWILEQNVDVIEVAELRYAKEGFRPVKWVIAVPEDSPIKTVEDLQGKRIATELVGYTKRYLKSKGIKAEVYFSWGATEVKPPYLADAIVDLTETGTSLKANKLRVIETILESTTRFITNKNAWKNSWKKKKMQDIAMLLQGALLAEEKVGLKMNVPKDSLKKVLCLLNSLHSPTISQLYDEEWYAVEVIINEKKVRELLPKLKDAGASGFVEYPLNKVIP.

Belongs to the ATP phosphoribosyltransferase family. Long subfamily. Requires Mg(2+) as cofactor.

It is found in the cytoplasm. The catalysed reaction is 1-(5-phospho-beta-D-ribosyl)-ATP + diphosphate = 5-phospho-alpha-D-ribose 1-diphosphate + ATP. The protein operates within amino-acid biosynthesis; L-histidine biosynthesis; L-histidine from 5-phospho-alpha-D-ribose 1-diphosphate: step 1/9. Its activity is regulated as follows. Feedback inhibited by histidine. Its function is as follows. Catalyzes the condensation of ATP and 5-phosphoribose 1-diphosphate to form N'-(5'-phosphoribosyl)-ATP (PR-ATP). Has a crucial role in the pathway because the rate of histidine biosynthesis seems to be controlled primarily by regulation of HisG enzymatic activity. The chain is ATP phosphoribosyltransferase from Thermodesulfovibrio yellowstonii (strain ATCC 51303 / DSM 11347 / YP87).